The chain runs to 254 residues: Protein EFFECTOR OF TRANSCRIPTION 3 (254 aa).

One can recognise a GIY-YIG domain in the interval 103–152; the sequence is RCTGLYELGVGVIGQDQGQNFDPDNNVLGVYVGQCVDVKSRLQDYGRRGG.

It localises to the cytoplasm. The polypeptide is Protein EFFECTOR OF TRANSCRIPTION 3 (Arabidopsis thaliana (Mouse-ear cress)).